The primary structure comprises 394 residues: NAC domain-containing protein 3 (394 aa).

The 145-residue stretch at 3 to 147 folds into the NAC domain; that stretch reads TPVGLRFCPT…TYTLCKVMFN (145 aa). A DNA-binding region spans residues 104 to 153; sequence IGEKKILMFYTSKESKSDWVIHEYHGFSHNQMMMTYTLCKVMFNGGMREK. 2 disordered regions span residues 152–173 and 264–300; these read EKSS…RRDS and NSLT…CDSF. Residues 155–165 are compositionally biased toward low complexity; that stretch reads SSSPSSSGVSG. Positions 286–300 are enriched in polar residues; sequence PKTNSIQTSSTCDSF.

Its subcellular location is the nucleus. This is NAC domain-containing protein 3 (NAC003) from Arabidopsis thaliana (Mouse-ear cress).